Consider the following 610-residue polypeptide: Cytosolic 5'-nucleotidase 1B (610 aa).

2 disordered regions span residues 1–34 and 101–277; these read MSQTSLKQKKNEPGMRSSKESLEAEKRKESDKTG and GSQE…DEDD. Residues 9–34 are compositionally biased toward basic and acidic residues; that stretch reads KKNEPGMRSSKESLEAEKRKESDKTG. The span at 119–132 shows a compositional bias: polar residues; it reads SQWSRISRSPSTKA. Residues 148–166 are compositionally biased toward low complexity; it reads PSSSTSSRTPSTSPSLHDS. The segment covering 167–183 has biased composition (pro residues); the sequence is SPPPLSGQPSLQPPASP. Over residues 236–265 the composition is skewed to polar residues; that stretch reads SRTSPTEWKSSSQRRGIYPASTQLDRNSLS. D467 serves as the catalytic Nucleophile.

Belongs to the 5'-nucleotidase type 3 family. Mg(2+) is required as a cofactor. In terms of tissue distribution, highly expressed in testis, placenta and pancreas. Detected at lower levels in heart, kidney, liver and lung.

It is found in the cytoplasm. The enzyme catalyses a ribonucleoside 5'-phosphate + H2O = a ribonucleoside + phosphate. It carries out the reaction AMP + H2O = adenosine + phosphate. Activated by ADP. In terms of biological role, catalyzes the hydrolysis of nucleotide monophosphates, releasing inorganic phosphate and the corresponding nucleoside, AMP is the major substrate. This Homo sapiens (Human) protein is Cytosolic 5'-nucleotidase 1B (NT5C1B).